Here is a 462-residue protein sequence, read N- to C-terminus: DIMBOA UDP-glucosyltransferase BX9 (462 aa).

Residue histidine 24 is the Proton acceptor of the active site. Histidine 24 serves as a coordination point for an anthocyanidin. The active-site Charge relay is the aspartate 115. UDP-alpha-D-glucose-binding residues include threonine 137, alanine 336, glutamine 338, histidine 353, tryptophan 356, asparagine 357, serine 358, and glutamate 361. Glycine 376 is an an anthocyanidin binding site. UDP-alpha-D-glucose-binding residues include aspartate 377 and glutamine 378.

This sequence belongs to the UDP-glycosyltransferase family. It depends on Mg(2+) as a cofactor. Ca(2+) serves as cofactor. As to expression, expressed at the same levels in roots and shoots.

The enzyme catalyses DIMBOA + UDP-alpha-D-glucose = DIMBOA beta-D-glucoside + UDP + H(+). The catalysed reaction is DIBOA + UDP-alpha-D-glucose = DIBOA beta-D-glucoside + UDP + H(+). Functionally, glucosyltransferase involved in the last step of benzoxazinoid glucoside biosynthesis. Catalyzes the glucosylation of hydroxamic acids utilizing UDP-glucose as glucose doner, reducing the toxicity of these natural insecticides for storage. Can use DIMBOA and DIBOA as substrates, HMBOA (2-hydroxy-7-methoxy-2H-1,4-benzoxazin-3(4H)-one) and HBOA (2-hydroxy-2H-1,4-benzoxazin-3(4H)-one) with a lower efficiency, but not indole acetic acid or quercitin. The sequence is that of DIMBOA UDP-glucosyltransferase BX9 (BX9) from Zea mays (Maize).